The following is a 471-amino-acid chain: UDP-glycosyltransferase 1 (471 aa).

His15 serves as the catalytic Proton acceptor. An an anthocyanidin-binding site is contributed by His15. The active-site Charge relay is the Asp124. Residues Thr146, Ala348, Gln350, His365, Trp368, Asn369, Ser370, and Glu373 each coordinate UDP-alpha-D-glucose. Position 388 (Ala388) interacts with an anthocyanidin. Positions 389 and 390 each coordinate UDP-alpha-D-glucose.

Belongs to the UDP-glycosyltransferase family. Expressed in roots. Detected in stems and leaves.

It catalyses the reaction a 7-hydroxyisoflavone + UDP-alpha-D-glucose = a 7-hydroxyisoflavone 7-O-beta-D-glucoside + UDP + H(+). Isoflavone 7-O-glucosyltransferase converting daidzein to daidzin, genistein to genistin and formononetin to ononin. Shows some activity toward the chalcone isoliquiritigenin, the flavanones liquiritigenin and naringenin, and the flavone apigenin, but not toward cyanidin, luteolin, kaempferol, quercetin, daidzin and puerarin. This is UDP-glycosyltransferase 1 from Pueraria montana var. lobata (Kudzu vine).